The following is a 293-amino-acid chain: ATP synthase gamma chain (293 aa).

It belongs to the ATPase gamma chain family. F-type ATPases have 2 components, CF(1) - the catalytic core - and CF(0) - the membrane proton channel. CF(1) has five subunits: alpha(3), beta(3), gamma(1), delta(1), epsilon(1). CF(0) has three main subunits: a, b and c.

It localises to the cell inner membrane. In terms of biological role, produces ATP from ADP in the presence of a proton gradient across the membrane. The gamma chain is believed to be important in regulating ATPase activity and the flow of protons through the CF(0) complex. The protein is ATP synthase gamma chain of Nitratidesulfovibrio vulgaris (strain DSM 19637 / Miyazaki F) (Desulfovibrio vulgaris).